A 116-amino-acid polypeptide reads, in one-letter code: Large ribosomal subunit protein P2 (116 aa).

The interval 60–116 (GKLSSMPSGGGVAAAAGGGGAAAGGGGAAPAAEEKKEEKKEESEEESDDDMGFGLFD) is disordered. Over residues 67-87 (SGGGVAAAAGGGGAAAGGGGA) the composition is skewed to gly residues. Basic and acidic residues predominate over residues 91–101 (AEEKKEEKKEE).

It belongs to the eukaryotic ribosomal protein P1/P2 family. As to quaternary structure, P1 and P2 exist as dimers at the large ribosomal subunit. Post-translationally, phosphorylated.

Plays an important role in the elongation step of protein synthesis. This Branchiostoma floridae (Florida lancelet) protein is Large ribosomal subunit protein P2.